The primary structure comprises 349 residues: EFTSSTGDTVMIDEGALVEGTIDEDAVGAFGGEIVDTIVKQYGETRARVFINEVASLAMRAIMHFGFSIGIDDESISDAAEAQIDESMDNAYERVQELIDTYENDDLESLPGRTVDETLEMKIMQTLGKARDSAGDIADEHFDDDNPAVIMAESGARGSMLNLTQMAACVGQQAVRGERINRGYEGRTLSHFKPGDLSAEAHGFVEDSYRSGLTPREFFFHAMGGREGLVDTAVRTSKSGYLQRRLINALSELETQYDGTVRDTSDNIVQFEFGEDNTSPVKVSSSDDNEIDVDEIADRVLAAEFEDEGEEFAGEQATNLSESADDRMDRDRPSSHGAAPIDVPEVGDD.

The tract at residues 306–349 (EDEGEEFAGEQATNLSESADDRMDRDRPSSHGAAPIDVPEVGDD) is disordered. Over residues 324-334 (ADDRMDRDRPS) the composition is skewed to basic and acidic residues.

Belongs to the RNA polymerase beta' chain family. Part of the RNA polymerase complex.

It localises to the cytoplasm. It carries out the reaction RNA(n) + a ribonucleoside 5'-triphosphate = RNA(n+1) + diphosphate. Its function is as follows. DNA-dependent RNA polymerase (RNAP) catalyzes the transcription of DNA into RNA using the four ribonucleoside triphosphates as substrates. Forms the clamp head domain. The chain is DNA-directed RNA polymerase subunit Rpo1N from Halococcus morrhuae (Micrococcus morrhuae).